Here is a 315-residue protein sequence, read N- to C-terminus: D-alanine--D-alanine ligase B (315 aa).

The ATP-grasp domain occupies 109-309 (KKVAAAAGVV…FAELLSWMVE (201 aa)). 135–190 (PMKPPYVVKPVREGSSFGVVIVKEDQPHPPQVIGSADWKYGDEVMVEGYIAGRELT) is an ATP binding site. 3 residues coordinate Mg(2+): Asp-259, Glu-276, and Asn-278.

It belongs to the D-alanine--D-alanine ligase family. The cofactor is Mg(2+). It depends on Mn(2+) as a cofactor.

It is found in the cytoplasm. It carries out the reaction 2 D-alanine + ATP = D-alanyl-D-alanine + ADP + phosphate + H(+). The protein operates within cell wall biogenesis; peptidoglycan biosynthesis. Functionally, cell wall formation. This Brucella melitensis biotype 1 (strain ATCC 23456 / CCUG 17765 / NCTC 10094 / 16M) protein is D-alanine--D-alanine ligase B.